A 354-amino-acid polypeptide reads, in one-letter code: ATP-dependent (S)-NAD(P)H-hydrate dehydratase (354 aa).

One can recognise a YjeF C-terminal domain in the interval Ala42–Ile350. Residues Gly155 and Asn208 to Arg214 contribute to the (6S)-NADPHX site. ATP-binding positions include Lys248–Asp252 and Gly267–Gly276. A (6S)-NADPHX-binding site is contributed by Asp277.

The protein belongs to the NnrD/CARKD family. Mg(2+) is required as a cofactor.

The catalysed reaction is (6S)-NADHX + ATP = ADP + phosphate + NADH + H(+). It carries out the reaction (6S)-NADPHX + ATP = ADP + phosphate + NADPH + H(+). In terms of biological role, catalyzes the dehydration of the S-form of NAD(P)HX at the expense of ATP, which is converted to ADP. Together with NAD(P)HX epimerase, which catalyzes the epimerization of the S- and R-forms, the enzyme allows the repair of both epimers of NAD(P)HX, a damaged form of NAD(P)H that is a result of enzymatic or heat-dependent hydration. This is ATP-dependent (S)-NAD(P)H-hydrate dehydratase from Vitis vinifera (Grape).